The chain runs to 72 residues: Translation initiation factor IF-1 (72 aa).

The region spanning 1-72 (MAKEDTLEFP…TKGRINYRFK (72 aa)) is the S1-like domain.

The protein belongs to the IF-1 family. In terms of assembly, component of the 30S ribosomal translation pre-initiation complex which assembles on the 30S ribosome in the order IF-2 and IF-3, IF-1 and N-formylmethionyl-tRNA(fMet); mRNA recruitment can occur at any time during PIC assembly.

The protein resides in the cytoplasm. In terms of biological role, one of the essential components for the initiation of protein synthesis. Stabilizes the binding of IF-2 and IF-3 on the 30S subunit to which N-formylmethionyl-tRNA(fMet) subsequently binds. Helps modulate mRNA selection, yielding the 30S pre-initiation complex (PIC). Upon addition of the 50S ribosomal subunit IF-1, IF-2 and IF-3 are released leaving the mature 70S translation initiation complex. The protein is Translation initiation factor IF-1 of Roseobacter denitrificans (strain ATCC 33942 / OCh 114) (Erythrobacter sp. (strain OCh 114)).